The primary structure comprises 93 residues: MKAERLEMLLLCVYRLGYILPVDVCIKIISVAQVSVQGRSTYSCKRRARSIGRCWRCYRVYPPVCNSKCDNRTCRPGISPNFKVVTFIRGWSN.

A basic region spans residues 44–47 (CKRR). Residues 54–69 (CWRCYRVYPPVCNSKC) form a C4-type zinc finger.

This sequence belongs to the carlaviruses nucleic acid-binding protein family.

In terms of biological role, suppressor of viral-induced RNA silencing. The potential mechanism of action is based on sequestering siRNAs. The protein is RNA silencing suppressor of Solanum tuberosum (Potato).